A 129-amino-acid polypeptide reads, in one-letter code: Cytochrome c oxidase subunit 5B, mitochondrial (129 aa).

The transit peptide at Met-1–Met-31 directs the protein to the mitochondrion. Residues Lys-68 and Lys-86 each carry the N6-acetyllysine modification. Zn(2+) contacts are provided by Cys-91, Cys-93, Cys-113, and Cys-116. An N6-acetyllysine modification is found at Lys-121.

It belongs to the cytochrome c oxidase subunit 5B family. In terms of assembly, component of the cytochrome c oxidase (complex IV, CIV), a multisubunit enzyme composed of 14 subunits. The complex is composed of a catalytic core of 3 subunits MT-CO1, MT-CO2 and MT-CO3, encoded in the mitochondrial DNA, and 11 supernumerary subunits COX4I1 (or COX4I2), COX5A, COX5B, COX6A2 (or COX6A1), COX6B1 (or COX6B2), COX6C, COX7A1 (or COX7A2), COX7B, COX7C, COX8B and NDUFA4, which are encoded in the nuclear genome. The complex exists as a monomer or a dimer and forms supercomplexes (SCs) in the inner mitochondrial membrane with NADH-ubiquinone oxidoreductase (complex I, CI) and ubiquinol-cytochrome c oxidoreductase (cytochrome b-c1 complex, complex III, CIII), resulting in different assemblies (supercomplex SCI(1)III(2)IV(1) and megacomplex MCI(2)III(2)IV(2)).

The protein localises to the mitochondrion inner membrane. Its pathway is energy metabolism; oxidative phosphorylation. Functionally, component of the cytochrome c oxidase, the last enzyme in the mitochondrial electron transport chain which drives oxidative phosphorylation. The respiratory chain contains 3 multisubunit complexes succinate dehydrogenase (complex II, CII), ubiquinol-cytochrome c oxidoreductase (cytochrome b-c1 complex, complex III, CIII) and cytochrome c oxidase (complex IV, CIV), that cooperate to transfer electrons derived from NADH and succinate to molecular oxygen, creating an electrochemical gradient over the inner membrane that drives transmembrane transport and the ATP synthase. Cytochrome c oxidase is the component of the respiratory chain that catalyzes the reduction of oxygen to water. Electrons originating from reduced cytochrome c in the intermembrane space (IMS) are transferred via the dinuclear copper A center (CU(A)) of subunit 2 and heme A of subunit 1 to the active site in subunit 1, a binuclear center (BNC) formed by heme A3 and copper B (CU(B)). The BNC reduces molecular oxygen to 2 water molecules using 4 electrons from cytochrome c in the IMS and 4 protons from the mitochondrial matrix. This is Cytochrome c oxidase subunit 5B, mitochondrial (COX5B) from Bos taurus (Bovine).